We begin with the raw amino-acid sequence, 146 residues long: SecB-like chaperone SmegB (146 aa).

This sequence belongs to the SecB-like family.

Functionally, chaperone component of an orphan antitoxin chaperone (AC) system; there is no toxin gene in close genomic proximity. When expressed in E.coli complements the cold-sensitive phenotype of a secB deletion, suggesting it may have a generic chaperone function. Does not however complement the toxin-neutralizing effect of its M.tuberculosis paralog Rv1957 (AC P95257) in E.coli, probably because the antitoxin genes are not from the same family. This is SecB-like chaperone SmegB from Mycolicibacterium smegmatis (strain ATCC 700084 / mc(2)155) (Mycobacterium smegmatis).